The sequence spans 22 residues: ELPGLPKGEKEQQEAIEHIDEV.

A disordered region spans residues 1–22 (ELPGLPKGEKEQQEAIEHIDEV). Residues 7–22 (KGEKEQQEAIEHIDEV) are compositionally biased toward basic and acidic residues.

It to human SET/PHAPII protein. Oligomer.

It localises to the cytoplasm. Has a role in the physiological regulation of fucosylation processes. The protein is Fuctinin-2 of Rattus norvegicus (Rat).